Here is a 526-residue protein sequence, read N- to C-terminus: Peptide chain release factor 3 (526 aa).

The region spanning 9-277 (DKRRTFAIIS…GIVEWAPKPL (269 aa)) is the tr-type G domain. Residues 18–25 (SHPDAGKT), 86–90 (DTPGH), and 140–143 (NKCD) each bind GTP.

Belongs to the TRAFAC class translation factor GTPase superfamily. Classic translation factor GTPase family. PrfC subfamily.

The protein resides in the cytoplasm. Its function is as follows. Increases the formation of ribosomal termination complexes and stimulates activities of RF-1 and RF-2. It binds guanine nucleotides and has strong preference for UGA stop codons. It may interact directly with the ribosome. The stimulation of RF-1 and RF-2 is significantly reduced by GTP and GDP, but not by GMP. The sequence is that of Peptide chain release factor 3 from Shewanella frigidimarina (strain NCIMB 400).